The sequence spans 337 residues: 25S rRNA (adenine(2142)-N(1))-methyltransferase (337 aa).

Gly-180 and Asp-201 together coordinate S-adenosyl-L-methionine.

The protein belongs to the BMT2 family.

The protein localises to the nucleus. Its subcellular location is the nucleolus. It catalyses the reaction adenosine(2142) in 25S rRNA + S-adenosyl-L-methionine = N(1)-methyladenosine(2142) in 25S rRNA + S-adenosyl-L-homocysteine + H(+). Functionally, S-adenosyl-L-methionine-dependent methyltransferase that specifically methylates the N(1) position of adenine 2142 in 25S rRNA. N(1)-methyladenine(2142) in 25S rRNA is present in helix 65, a region that accounts for most of the intersubunit surface of the large subunit. This Saccharomyces cerevisiae (strain ATCC 204508 / S288c) (Baker's yeast) protein is 25S rRNA (adenine(2142)-N(1))-methyltransferase.